We begin with the raw amino-acid sequence, 333 residues long: Taste receptor type 2 member 110 (333 aa).

Over 1–13 (MFSQIISTSDIFT) the chain is Extracellular. A helical membrane pass occupies residues 14 to 34 (FTIILFVELVIGILGNGFIAL). Residues 35–60 (VNIMDWTKRRSISSADQILTALAITR) lie on the Cytoplasmic side of the membrane. Residues 61 to 81 (FLYVWFMIICILLFMLCPHLL) form a helical membrane-spanning segment. The Extracellular segment spans residues 82–89 (TRSEIVTS). Residues 90-110 (IGIIWIVNNHFSVWLATCLGV) traverse the membrane as a helical segment. The Cytoplasmic portion of the chain corresponds to 111–133 (FYFLKIANFSNSLFLYLKWRVKK). The chain crosses the membrane as a helical span at residues 134-154 (VVLMIIQVSMIFLILNLLSLS). Topologically, residues 155-205 (MYDQFSIDVYEGNTSYNLGDSTPFPTISLFINSSKVFVITNSSHIFLPINS) are extracellular. Residues Asn-186 and Asn-195 are each glycosylated (N-linked (GlcNAc...) asparagine). A helical membrane pass occupies residues 206-226 (LFMLIPFTVSLVAFLMLIFSL). The Cytoplasmic segment spans residues 227–255 (WKHHKKMQVNAKPPRDASTMAHIKALQTG). The chain crosses the membrane as a helical span at residues 256 to 276 (FSFLLLYAVYLLFIVIGMLSL). Residues 277-283 (RLIGGKL) lie on the Extracellular side of the membrane. Residues 284–304 (ILLFDHISGIGFPISHSFVLI) traverse the membrane as a helical segment. Residues 305-333 (LGNNKLRQASLSVLHCLRCRSKDMDTMGP) lie on the Cytoplasmic side of the membrane.

It belongs to the G-protein coupled receptor T2R family.

It localises to the membrane. Gustducin-coupled receptor implicated in the perception of bitter compounds in the oral cavity and the gastrointestinal tract. Signals through PLCB2 and the calcium-regulated cation channel TRPM5. The sequence is that of Taste receptor type 2 member 110 from Mus musculus (Mouse).